Consider the following 395-residue polypeptide: Elongation factor Tu (395 aa).

The region spanning 10 to 204 (KPHVNIGTIG…AVDEYIPTPQ (195 aa)) is the tr-type G domain. Residues 19–26 (GHVDHGKT) form a G1 region. 19–26 (GHVDHGKT) is a GTP binding site. A Mg(2+)-binding site is contributed by T26. Residues 60 to 64 (GITIS) are G2. Residues 81–84 (DCPG) are G3. GTP-binding positions include 81 to 85 (DCPGH) and 136 to 139 (NKCD). A G4 region spans residues 136-139 (NKCD). The tract at residues 174–176 (SAL) is G5.

Belongs to the TRAFAC class translation factor GTPase superfamily. Classic translation factor GTPase family. EF-Tu/EF-1A subfamily. Monomer.

It is found in the cytoplasm. The enzyme catalyses GTP + H2O = GDP + phosphate + H(+). GTP hydrolase that promotes the GTP-dependent binding of aminoacyl-tRNA to the A-site of ribosomes during protein biosynthesis. This Geobacillus stearothermophilus (Bacillus stearothermophilus) protein is Elongation factor Tu.